Consider the following 104-residue polypeptide: Gastrin (104 aa).

A signal peptide spans 1-21 (MPRLCVCMLVLVLALATFSEA). The propeptide occupies 22–58 (SWKPRSQLQDASSGPRTNGALEQHQLEKLGPASHHRR). The tract at residues 23–104 (WKPRSQLQDA…RSAEEEDQYN (82 aa)) is disordered. Polar residues predominate over residues 25–37 (PRSQLQDASSGPR). Y87 bears the Sulfotyrosine mark. The residue at position 92 (F92) is a Phenylalanine amide. The residue at position 96 (S96) is a Phosphoserine. The propeptide occupies 96–104 (SAEEEDQYN). Position 103 is a sulfotyrosine (Y103).

This sequence belongs to the gastrin/cholecystokinin family. In terms of processing, sulfation on Tyr-87 enhances proteolytic processing, and blocks peptide degradation. Levels of sulfation differ between proteolytically-cleaved gastrins and between tissues.

It is found in the secreted. Its function is as follows. Gastrin stimulates the stomach mucosa to produce and secrete hydrochloric acid and the pancreas to secrete its digestive enzymes. It also stimulates smooth muscle contraction and increases blood circulation and water secretion in the stomach and intestine. The protein is Gastrin (Gast) of Rattus norvegicus (Rat).